A 639-amino-acid chain; its full sequence is DNA mismatch repair protein MutL (639 aa).

A disordered region spans residues 336-392 (SAHDDPTPAISGAARDEEPRGVENRASAGENRFNRPASSPVASAPRPAHVAAPRMPA). Positions 349–358 (ARDEEPRGVE) are enriched in basic and acidic residues. Low complexity predominate over residues 370-392 (RPASSPVASAPRPAHVAAPRMPA).

It belongs to the DNA mismatch repair MutL/HexB family.

Its function is as follows. This protein is involved in the repair of mismatches in DNA. It is required for dam-dependent methyl-directed DNA mismatch repair. May act as a 'molecular matchmaker', a protein that promotes the formation of a stable complex between two or more DNA-binding proteins in an ATP-dependent manner without itself being part of a final effector complex. This is DNA mismatch repair protein MutL from Edwardsiella ictaluri (strain 93-146).